The chain runs to 672 residues: MGIKGLTKFIADAAPNAIKEIKIESLMGRIIAIDASMSLYQFIIAIRDSEQYGNLTNESGETTSHISGLMSRSIRLMENGLKPIYVFDGAPPELKGSELEKRGEKRQKAEELLKKAKEEGNLEEIKKQSGRTVRVTRKQNEEAKKLLTLMGIPIIEAPCEAESQCAFLTKYNLAHATATEDADALVFGTKILIRNLNANATSNQNKNKNNSKRGYILTEINLEQVLKGLNLTMDEFIDFCILCGCDYCDTIKGIGSKTAYNLIKEYNCIEKIIENIDQNKYQVPSNFRFQEARKSFINPNVLPKEDIKIDWNEPQIEELKHFLIKDYNFNELRVTNYINRLLKARKVTTQRRLDNFFTACTKKSTKLIVEETKKEQTLPARKGKKRPTAGDKNKQKAVKRKIEQANANGHHKMKEENKSVDNEKNEDGIKSVDNEKNEDGIKSVDDEKNLDDEKNLDDEKNKDDEKNKDDEKNKDDEKNKDDEKNKDDEKKSLDNFSSNLFDSDKESESGNIIKNEKQNMDDEKINDNLPSLFGDHSRIRHTENKDNISDINNNNNNNNSSSNNNNISNNHFNSVSSNSTFNSSTKLKSEDTLKSNSPLKEDSPNSYNNIKNNNHTININSQINNHKEPISNNNLNNINNSTEIKKKNTLFLLPFCPKDVTNVKKKKYTQRC.

Positions 1 to 106 (MGIKGLTKFI…SELEKRGEKR (106 aa)) are N-domain. Asp34 serves as a coordination point for Mg(2+). Arg47 and Arg72 together coordinate DNA. Residues Asp88, Glu160, Glu162, Asp181, and Asp183 each contribute to the Mg(2+) site. The tract at residues 124 to 266 (EIKKQSGRTV…KTAYNLIKEY (143 aa)) is I-domain. Residue Glu160 participates in DNA binding. DNA-binding residues include Gly244 and Asp246. Asp246 contacts Mg(2+). An interaction with PCNA region spans residues 349-357 (TQRRLDNFF). The segment at 371 to 610 (ETKKEQTLPA…EDSPNSYNNI (240 aa)) is disordered. Composition is skewed to basic and acidic residues over residues 413-493 (MKEE…KKSL), 502-526 (DSDK…EKIN), and 535-548 (DHSR…KDNI). Positions 549–584 (SDINNNNNNNNSSSNNNNISNNHFNSVSSNSTFNSS) are enriched in low complexity. The span at 587–603 (LKSEDTLKSNSPLKEDS) shows a compositional bias: basic and acidic residues.

Belongs to the XPG/RAD2 endonuclease family. FEN1 subfamily. Interacts with PCNA1 and PCNA2. Three molecules of FEN1 bind to one PCNA trimer with each molecule binding to one PCNA monomer. PCNA stimulates the nuclease activity without altering cleavage specificity. Mg(2+) serves as cofactor. In terms of processing, phosphorylated. Phosphorylation upon DNA damage induces relocalization to the nuclear plasma.

Its subcellular location is the nucleus. The protein localises to the nucleolus. It is found in the nucleoplasm. The protein resides in the mitochondrion. Structure-specific nuclease with 5'-flap endonuclease and 5'-3' exonuclease activities involved in DNA replication and repair. During DNA replication, cleaves the 5'-overhanging flap structure that is generated by displacement synthesis when DNA polymerase encounters the 5'-end of a downstream Okazaki fragment. It enters the flap from the 5'-end and then tracks to cleave the flap base, leaving a nick for ligation. Also involved in the long patch base excision repair (LP-BER) pathway, by cleaving within the apurinic/apyrimidinic (AP) site-terminated flap. Acts as a genome stabilization factor that prevents flaps from equilibrating into structures that lead to duplications and deletions. Also possesses 5'-3' exonuclease activity on nicked or gapped double-stranded DNA, and exhibits RNase H activity. Also involved in replication and repair of rDNA and in repairing mitochondrial DNA. In Plasmodium falciparum (isolate 3D7), this protein is Flap endonuclease 1.